Consider the following 100-residue polypeptide: ATP synthase subunit c (100 aa).

A run of 2 helical transmembrane segments spans residues 27–47 (SVIAGGIGLGLAALGGAIGMG) and 72–92 (FIALAMIEAQVIYALVITLIV).

Belongs to the ATPase C chain family. In terms of assembly, F-type ATPases have 2 components, F(1) - the catalytic core - and F(0) - the membrane proton channel. F(1) has five subunits: alpha(3), beta(3), gamma(1), delta(1), epsilon(1). F(0) has three main subunits: a(1), b(2) and c(10-14). The alpha and beta chains form an alternating ring which encloses part of the gamma chain. F(1) is attached to F(0) by a central stalk formed by the gamma and epsilon chains, while a peripheral stalk is formed by the delta and b chains.

Its subcellular location is the cell inner membrane. F(1)F(0) ATP synthase produces ATP from ADP in the presence of a proton or sodium gradient. F-type ATPases consist of two structural domains, F(1) containing the extramembraneous catalytic core and F(0) containing the membrane proton channel, linked together by a central stalk and a peripheral stalk. During catalysis, ATP synthesis in the catalytic domain of F(1) is coupled via a rotary mechanism of the central stalk subunits to proton translocation. In terms of biological role, key component of the F(0) channel; it plays a direct role in translocation across the membrane. A homomeric c-ring of between 10-14 subunits forms the central stalk rotor element with the F(1) delta and epsilon subunits. The sequence is that of ATP synthase subunit c from Campylobacter concisus (strain 13826).